The primary structure comprises 212 residues: Negative modulator of initiation of replication (212 aa).

Interaction with DNA regions lie at residues Ala113–Val114 and Arg144–Tyr148.

It belongs to the SeqA family. In terms of assembly, homodimer. Polymerizes to form helical filaments.

It is found in the cytoplasm. In terms of biological role, negative regulator of replication initiation, which contributes to regulation of DNA replication and ensures that replication initiation occurs exactly once per chromosome per cell cycle. Binds to pairs of hemimethylated GATC sequences in the oriC region, thus preventing assembly of replication proteins and re-initiation at newly replicated origins. Repression is relieved when the region becomes fully methylated. The chain is Negative modulator of initiation of replication from Actinobacillus succinogenes (strain ATCC 55618 / DSM 22257 / CCUG 43843 / 130Z).